The chain runs to 460 residues: GTPase Der (460 aa).

EngA-type G domains follow at residues 21 to 187 (PRVV…FSVD) and 198 to 373 (VRLA…AQLN). GTP contacts are provided by residues 27 to 34 (GRPNVGKS), 74 to 78 (DTSGF), 141 to 144 (NKTE), 204 to 211 (GKPNTGKS), 251 to 255 (DTAGI), and 316 to 319 (NKWD). One can recognise a KH-like domain in the interval 374-457 (TKVETSALNT…PVKLTIRKNC (84 aa)).

It belongs to the TRAFAC class TrmE-Era-EngA-EngB-Septin-like GTPase superfamily. EngA (Der) GTPase family. Associates with the 50S ribosomal subunit.

GTPase that plays an essential role in the late steps of ribosome biogenesis. The protein is GTPase Der of Treponema pallidum subsp. pallidum (strain SS14).